A 231-amino-acid polypeptide reads, in one-letter code: ATP phosphoribosyltransferase (231 aa).

The protein belongs to the ATP phosphoribosyltransferase family. Short subfamily. Heteromultimer composed of HisG and HisZ subunits.

The protein resides in the cytoplasm. It carries out the reaction 1-(5-phospho-beta-D-ribosyl)-ATP + diphosphate = 5-phospho-alpha-D-ribose 1-diphosphate + ATP. The protein operates within amino-acid biosynthesis; L-histidine biosynthesis; L-histidine from 5-phospho-alpha-D-ribose 1-diphosphate: step 1/9. Functionally, catalyzes the condensation of ATP and 5-phosphoribose 1-diphosphate to form N'-(5'-phosphoribosyl)-ATP (PR-ATP). Has a crucial role in the pathway because the rate of histidine biosynthesis seems to be controlled primarily by regulation of HisG enzymatic activity. This is ATP phosphoribosyltransferase from Brucella suis (strain ATCC 23445 / NCTC 10510).